The following is a 30-amino-acid chain: Trypsin inhibitor 3 (30 aa).

Intrachain disulfides connect Cys4–Cys21, Cys11–Cys23, and Cys17–Cys29.

Belongs to the protease inhibitor I7 (squash-type serine protease inhibitor) family.

It localises to the secreted. Inhibits trypsin. The chain is Trypsin inhibitor 3 from Momordica charantia (Bitter gourd).